The primary structure comprises 332 residues: Probable allantoicase (332 aa).

The protein belongs to the allantoicase family.

The enzyme catalyses allantoate + H2O = (S)-ureidoglycolate + urea. It functions in the pathway nitrogen metabolism; (S)-allantoin degradation; (S)-ureidoglycolate from allantoate (aminidohydrolase route): step 1/1. The chain is Probable allantoicase from Pseudomonas aeruginosa (strain UCBPP-PA14).